Reading from the N-terminus, the 435-residue chain is Serine protease snk (435 aa).

An N-terminal signal peptide occupies residues Met1–Ala27. The Clip domain occupies Phe92 to Cys138. 7 disulfides stabilise this stretch: Cys93–Cys137, Cys104–Cys127, Cys110–Cys138, Cys179–Cys303, Cys220–Cys236, Cys346–Cys366, and Cys377–Cys408. A Peptidase S1 domain is found at Ile186–Phe432. The active-site Charge relay system is His235. Asn255 is a glycosylation site (N-linked (GlcNAc...) asparagine). The active-site Charge relay system is the Asp283. Residue Ser381 is the Charge relay system of the active site.

Belongs to the peptidase S1 family. CLIP subfamily. As to quaternary structure, interacts (via N-terminal prodomain) with ea/easter (via Peptidase domain); leads to proteolytic activation of ea by snk. This interaction does not require sulfation of a vitelline membrane component by pip but proteolytic cleavage of ea by snk does. In terms of processing, proteolytically activated by gd. May also be cleaved by another protease.

The protein localises to the secreted. Its function is as follows. Component of the extracellular signaling pathway that establishes the dorsal-ventral pathway of the embryo. A protease cascade involving ndl, gd, snk and ea results in activation of the spz Toll receptor ligand; acts downstream of ndl and gd. Activation of ea requires both activation of the ndl-gd-snk protease cascade and sulfation of a vitelline membrane component by pip. Localized activation of the Toll receptor in the ventral region of the embryo defines cell identities along the dorsal-ventral continuum. The protein is Serine protease snk of Drosophila melanogaster (Fruit fly).